The sequence spans 243 residues: MVKELLRNHSSVRIYDGNPISKEIIEELIATAQMAATSHFVQAYSVIWVTDEEKKEKLGMLSGNPRQYETSGGAFVFCVDFKRLQSAGKLEGVDIVADSAENVLVGVADVSLFAQNFVVAAESMGYGICYIGGVRNKPEEISELFNLPEYVFPLFGLTIGVPARRNEVKPRLPVAAVLHENEYNTEKYEELLPAYNDTMEAYYNNRSSNRKIDNWTKQMADFLIEQRRPHIKDFLAKKGFNWK.

The protein belongs to the flavin oxidoreductase frp family. It depends on FMN as a cofactor.

The protein is CR(VI) reductase (chrR) of Pseudomonas sp. (strain G-1).